The following is a 304-amino-acid chain: Insulin-like growth factor 1 receptor (304 aa).

2 Fibronectin type-III domains span residues 1–43 (ERTV…TMPA) and 49–142 (IPGP…VQAK). Residues 1 to 147 (ERTVISNLRP…YVQAKTTYEN (147 aa)) are Extracellular-facing. Asparagine 115 and asparagine 128 each carry an N-linked (GlcNAc...) asparagine glycan. Residues 148 to 168 (FIHLIIALPVAVLLIVGGLVI) form a helical membrane-spanning segment. Residues 169–304 (MLYVFHRKRN…HMNGGRKNER (136 aa)) are Cytoplasmic-facing. Serine 225 bears the Phosphoserine; by GSK3-beta mark. Serine 229 is modified (phosphoserine). Positions 231–304 (ENKPPEPEEL…HMNGGRKNER (74 aa)) are disordered. Positions 237–246 (PEELDLEPEN) are enriched in acidic residues. Residues 247-263 (MESVPLDPSASSSSLPL) show a composition bias toward low complexity. Basic and acidic residues predominate over residues 264-273 (PDRHSGHKAE).

This sequence belongs to the protein kinase superfamily. Tyr protein kinase family. Insulin receptor subfamily. Tetramer of 2 alpha and 2 beta chains linked by disulfide bonds. The alpha chains contribute to the formation of the ligand-binding domain, while the beta chain carries the kinase domain. Forms a hybrid receptor with INSR, the hybrid is a tetramer consisting of 1 alpha chain and 1 beta chain of INSR and 1 alpha chain and 1 beta chain of IGF1R. Interacts with ARRB1 and ARRB2. Interacts with GRB10. Interacts with RACK1. Interacts with SOCS1, SOCS2 and SOCS3. Interacts with 14-3-3 proteins. Interacts with NMD2. Interacts with MAP3K5. Interacts with STAT3. Found in a ternary complex with IGF1 and ITGAV:ITGB3 or ITGA6:ITGB4. Interacts (nascent precursor form) with ZFAND2B. In terms of processing, autophosphorylated on tyrosine residues in response to ligand binding. Autophosphorylation occurs in trans, i.e. one subunit of the dimeric receptor phosphorylates tyrosine residues on the other subunit. Autophosphorylation occurs in a sequential manner. While every single phosphorylation increases kinase activity, all three tyrosine residues in the kinase activation loop have to be phosphorylated for optimal activity. Can be autophosphorylated at additional tyrosine residues (in vitro). May also be phosphorylated at tyrosine residues by mTORC2. Autophosphorylated is followed by phosphorylation of juxtamembrane tyrosines and C-terminal serines. Phosphorylation of Ser-225 by GSK-3beta restrains kinase activity and promotes cell surface expression, it requires a priming phosphorylation at Ser-229. Dephosphorylated by PTPN1. Post-translationally, polyubiquitinated in the activation loop through both 'Lys-48' and 'Lys-29' linkages, promoting receptor endocytosis and subsequent degradation by the proteasome. Ubiquitination is facilitated by pre-existing phosphorylation. Sumoylated with SUMO1. In terms of processing, controlled by regulated intramembrane proteolysis (RIP). Undergoes metalloprotease-dependent constitutive ectodomain shedding to produce a membrane-anchored 52 kDa C-Terminal fragment which is further processed by presenilin gamma-secretase to yield an intracellular 50 kDa fragment.

Its subcellular location is the cell membrane. It catalyses the reaction L-tyrosyl-[protein] + ATP = O-phospho-L-tyrosyl-[protein] + ADP + H(+). With respect to regulation, activated by autophosphorylation at tyrosines in the kinase activation loop; phosphorylation at all three tyrosine residues is required for optimal kinase activity. Inhibited by MSC1609119A-1, BMS-754807, PQIP, benzimidazole pyridinone, isoquinolinedione, bis-azaindole, 3-cyanoquinoline, 2,4-bis-arylamino-1,3-pyrimidine, pyrrolopyrimidine, pyrrole-5-carboxaldehyde, picropodophyllin (PPP), tyrphostin derivatives. While most inhibitors bind to the ATP binding pocket, MSC1609119A-1 functions as allosteric inhibitor and binds close to the DFG motif and the activation loop. Receptor tyrosine kinase which mediates actions of insulin-like growth factor 1 (IGF1). Binds IGF1 with high affinity and IGF2 and insulin (INS) with a lower affinity. The activated IGF1R is involved in cell growth and survival control. IGF1R is crucial for tumor transformation and survival of malignant cell. Ligand binding activates the receptor kinase, leading to receptor autophosphorylation, and tyrosines phosphorylation of multiple substrates, that function as signaling adapter proteins including, the insulin-receptor substrates (IRS1/2), Shc and 14-3-3 proteins. Phosphorylation of IRSs proteins lead to the activation of two main signaling pathways: the PI3K-AKT/PKB pathway and the Ras-MAPK pathway. The result of activating the MAPK pathway is increased cellular proliferation, whereas activating the PI3K pathway inhibits apoptosis and stimulates protein synthesis. Phosphorylated IRS1 can activate the 85 kDa regulatory subunit of PI3K (PIK3R1), leading to activation of several downstream substrates, including protein AKT/PKB. AKT phosphorylation, in turn, enhances protein synthesis through mTOR activation and triggers the antiapoptotic effects of IGFIR through phosphorylation and inactivation of BAD. In parallel to PI3K-driven signaling, recruitment of Grb2/SOS by phosphorylated IRS1 or Shc leads to recruitment of Ras and activation of the ras-MAPK pathway. In addition to these two main signaling pathways IGF1R signals also through the Janus kinase/signal transducer and activator of transcription pathway (JAK/STAT). Phosphorylation of JAK proteins can lead to phosphorylation/activation of signal transducers and activators of transcription (STAT) proteins. In particular activation of STAT3, may be essential for the transforming activity of IGF1R. The JAK/STAT pathway activates gene transcription and may be responsible for the transforming activity. JNK kinases can also be activated by the IGF1R. IGF1 exerts inhibiting activities on JNK activation via phosphorylation and inhibition of MAP3K5/ASK1, which is able to directly associate with the IGF1R. When present in a hybrid receptor with INSR, binds IGF1. The sequence is that of Insulin-like growth factor 1 receptor (IGF1R) from Sus scrofa (Pig).